The primary structure comprises 223 residues: Sporulation-specific protein 19 (223 aa).

Residues 1 to 20 form the signal peptide; sequence MKKQILIVAAQSILCSTVFG. A lipid anchor (GPI-anchor amidated asparagine) is attached at Asn198. The propeptide at 199-223 is removed in mature form; that stretch reads ASNFLTPTTVALAVLLTILLFIQAY.

Post-translationally, the GPI-anchor is attached to the protein in the endoplasmic reticulum and serves to target the protein to the cell surface. There, the glucosamine-inositol phospholipid moiety is cleaved off and the GPI-modified mannoprotein is covalently attached via its lipidless GPI glycan remnant to the 1,6-beta-glucan of the outer cell wall layer.

Its subcellular location is the secreted. It is found in the cell wall. The protein resides in the membrane. Involved in sporulation. Essential for completion of the nuclear division. In Saccharomyces cerevisiae (strain ATCC 204508 / S288c) (Baker's yeast), this protein is Sporulation-specific protein 19 (SPO19).